Consider the following 142-residue polypeptide: Large ribosomal subunit protein uL13 (142 aa).

Belongs to the universal ribosomal protein uL13 family. Part of the 50S ribosomal subunit.

In terms of biological role, this protein is one of the early assembly proteins of the 50S ribosomal subunit, although it is not seen to bind rRNA by itself. It is important during the early stages of 50S assembly. In Aromatoleum aromaticum (strain DSM 19018 / LMG 30748 / EbN1) (Azoarcus sp. (strain EbN1)), this protein is Large ribosomal subunit protein uL13.